The chain runs to 390 residues: Cell division protein FtsZ (390 aa).

GTP-binding positions include 21 to 25, 108 to 110, Glu-139, Arg-143, and Asp-187; these read GGGNN and GTG. Residues 315–390 are disordered; the sequence is FDDKPTSHGR…EERRSRRTRR (76 aa). Residues 326–360 are compositionally biased toward polar residues; the sequence is SGSTGFGTSVNTSSNATSKDESFTSNSSNAQATDS. A compositionally biased stretch (basic and acidic residues) spans 361 to 384; sequence VSERTHTTKEDDIPSFIRNREERR.

It belongs to the FtsZ family. As to quaternary structure, homodimer. Polymerizes to form a dynamic ring structure in a strictly GTP-dependent manner. Interacts directly with several other division proteins.

It is found in the cytoplasm. Functionally, essential cell division protein that forms a contractile ring structure (Z ring) at the future cell division site. The regulation of the ring assembly controls the timing and the location of cell division. One of the functions of the FtsZ ring is to recruit other cell division proteins to the septum to produce a new cell wall between the dividing cells. Binds GTP and shows GTPase activity. In Staphylococcus aureus (strain NCTC 8325 / PS 47), this protein is Cell division protein FtsZ.